The sequence spans 382 residues: MSKKQRCLMMESLPHEVVECILERLDADPLLRFKAVSKQWKSTIESPFFQRRQFTQRQQSGNPDVLMVSRCADINSEIEALTTLVLGSSSSVKIPTPWEEEEEEDKEYSVSQDSCDGLVCLFDKFKSGFVFNPATRWYHPLPLCQLQQLLIAIGDGFYDLGYRVSRLGFGKDKLTGTYKPVWLYNSIEIGLENATTCEVFDFSTNAWRYVSPAAPYRIVGCPAPVCVDGSLHWFTECEETKILSFDLHTETFQVVSKAPFANVDGFDIVMCNLDNRLCVSEMKLPNQVIWSFNSGNKTWHKMCSINLDITSRWFGPTQVCAVLPLALLDGKKKKKKKLLFYCRVRKRTMVVHDDETKSYDVAFEADSIGHPVCYFPSLISIS.

An F-box domain is found at 7–52; it reads CLMMESLPHEVVECILERLDADPLLRFKAVSKQWKSTIESPFFQRR. Residues 78-101 form an LRR 1 repeat; sequence IEALTTLVLGSSSSVKIPTPWEEE. The Kelch 1 repeat unit spans residues 180–227; that stretch reads PVWLYNSIEIGLENATTCEVFDFSTNAWRYVSPAAPYRIVGCPAPVCV. Residues 239-262 form an LRR 2 repeat; sequence ETKILSFDLHTETFQVVSKAPFAN. One copy of the Kelch 2 repeat lies at 270 to 319; that stretch reads MCNLDNRLCVSEMKLPNQVIWSFNSGNKTWHKMCSINLDITSRWFGPTQV.

This is F-box/LRR-repeat/kelch-repeat protein At1g09650 from Arabidopsis thaliana (Mouse-ear cress).